Reading from the N-terminus, the 292-residue chain is MAGLRRGAAAVAPAGTAGFGRPGRPQGRRQQELGKQRAAPRPGPRSKEKKKVNCKPKNQDEQEIPFRLREIMRSRQEMKNPISNKKRKKEAQAAFSKTLEKEAKGVEPDIAIPKFKQRKWESDRAYVRRMEQEAQHVLFLSKNQANRQPEVQAAPKKEKSERKKAFQKRRLDKARQRREEKAAERLEQELLQDTVKFGEVVLQPPELTAKPRMSVSRDQPGKKSLMLKKLLSPGSVSQPLTTSLARQRIVAEERERAVNAYRALKRLQQQRQETQSPQPPHLPPGKKPEMQL.

A compositionally biased stretch (low complexity) spans 1–16; it reads MAGLRRGAAAVAPAGT. Disordered stretches follow at residues 1 to 94, 139 to 183, 205 to 243, and 263 to 292; these read MAGL…AQAA, FLSK…EKAA, PELT…LTTS, and ALKR…EMQL. Composition is skewed to basic and acidic residues over residues 57-78, 155-164, and 173-183; these read KNQD…RQEM, PKKEKSERKK, and KARQRREEKAA. Residues 156–194 adopt a coiled-coil conformation; sequence KKEKSERKKAFQKRRLDKARQRREEKAAERLEQELLQDT. Low complexity predominate over residues 222 to 232; the sequence is KKSLMLKKLLS. Residue serine 232 is modified to Phosphoserine. The span at 234-243 shows a compositional bias: polar residues; the sequence is GSVSQPLTTS. Positions 247–276 form a coiled coil; that stretch reads QRIVAEERERAVNAYRALKRLQQQRQETQS.

It is found in the chromosome. This is Coiled-coil domain-containing protein 137 (CCDC137) from Bos taurus (Bovine).